Reading from the N-terminus, the 458-residue chain is Methionine aminopeptidase 2-2 (458 aa).

Residues 1-14 (MGSKTPERDGHKGQ) show a composition bias toward basic and acidic residues. A disordered region spans residues 1 to 93 (MGSKTPERDG…QSSPPRVPLS (93 aa)). Positions 67 to 82 (QKKKRKSKKKGKKKAA) are enriched in basic residues. His-209 provides a ligand contact to substrate. Asp-230, Asp-241, and His-310 together coordinate a divalent metal cation. Residue His-318 participates in substrate binding. Glu-343 and Glu-439 together coordinate a divalent metal cation.

This sequence belongs to the peptidase M24A family. Methionine aminopeptidase eukaryotic type 2 subfamily. The cofactor is Co(2+). Zn(2+) serves as cofactor. It depends on Mn(2+) as a cofactor. Fe(2+) is required as a cofactor.

Its subcellular location is the cytoplasm. The catalysed reaction is Release of N-terminal amino acids, preferentially methionine, from peptides and arylamides.. In terms of biological role, cotranslationally removes the N-terminal methionine from nascent proteins. The N-terminal methionine is often cleaved when the second residue in the primary sequence is small and uncharged (Met-Ala-, Cys, Gly, Pro, Ser, Thr, or Val). The protein is Methionine aminopeptidase 2-2 of Emericella nidulans (strain FGSC A4 / ATCC 38163 / CBS 112.46 / NRRL 194 / M139) (Aspergillus nidulans).